The following is a 316-amino-acid chain: L-lactate dehydrogenase (316 aa).

NAD(+) is bound by residues V15, D37, K42, Y68, and 82-83; that span reads GL. Substrate-binding positions include Q85, R91, and 123 to 126; that span reads NPVD. NAD(+)-binding positions include 121–123 and T146; that span reads ASN. A substrate-binding site is contributed by 151-154; the sequence is DTSR. R156 and H171 together coordinate beta-D-fructose 1,6-bisphosphate. The active-site Proton acceptor is H178. Y222 is subject to Phosphotyrosine. T231 provides a ligand contact to substrate.

This sequence belongs to the LDH/MDH superfamily. LDH family. In terms of assembly, homotetramer.

The protein localises to the cytoplasm. The enzyme catalyses (S)-lactate + NAD(+) = pyruvate + NADH + H(+). It participates in fermentation; pyruvate fermentation to lactate; (S)-lactate from pyruvate: step 1/1. With respect to regulation, allosterically activated by fructose 1,6-bisphosphate (FBP). Its function is as follows. Catalyzes the conversion of lactate to pyruvate. This chain is L-lactate dehydrogenase, found in Borreliella afzelii (strain PKo) (Borrelia afzelii).